The sequence spans 302 residues: Urease accessory protein UreD 1 (302 aa).

Belongs to the UreD family. In terms of assembly, ureD, UreF and UreG form a complex that acts as a GTP-hydrolysis-dependent molecular chaperone, activating the urease apoprotein by helping to assemble the nickel containing metallocenter of UreC. The UreE protein probably delivers the nickel.

Its subcellular location is the cytoplasm. In terms of biological role, required for maturation of urease via the functional incorporation of the urease nickel metallocenter. The sequence is that of Urease accessory protein UreD 1 from Psychrobacter cryohalolentis (strain ATCC BAA-1226 / DSM 17306 / VKM B-2378 / K5).